The chain runs to 456 residues: Outer membrane efflux protein BepC (456 aa).

Residues 1–28 (MRYTVFKACKELVAAAVLLSGTVLTGQA) form the signal peptide. Residues 312–341 (RTSAQIRQSKEQLGQARIEVDVVQDKVRQA) adopt a coiled-coil conformation.

The protein belongs to the outer membrane factor (OMF) (TC 1.B.17) family. In terms of assembly, probably part of a tripartite efflux pump, which is composed of an outer membrane efflux protein, an inner membrane protein and a protein that expands the periplasmic space. Could form a tripartite pump with BepD and BepE or with BepF and BepG.

The protein localises to the cell outer membrane. In terms of biological role, involved in the efflux of toxic and relatively hydrophobic compounds. Influences survival inside the host. The polypeptide is Outer membrane efflux protein BepC (bepC) (Brucella suis biovar 1 (strain 1330)).